The following is a 190-amino-acid chain: Isopentenyl-diphosphate Delta-isomerase (190 aa).

The Mn(2+) site is built by His-27 and His-34. In terms of domain architecture, Nudix hydrolase spans 32–171 (PLHFAFSSYI…PFVFSPWMVD (140 aa)). The active site involves Cys-69. Cys-69 is a binding site for Mg(2+). His-71 contributes to the Mn(2+) binding site. Glu-89 is a Mg(2+) binding site. Mn(2+) contacts are provided by Glu-119 and Glu-121. The active site involves Glu-121.

This sequence belongs to the IPP isomerase type 1 family. The cofactor is Mg(2+). Requires Mn(2+) as cofactor.

Its subcellular location is the cytoplasm. The catalysed reaction is isopentenyl diphosphate = dimethylallyl diphosphate. It participates in isoprenoid biosynthesis; dimethylallyl diphosphate biosynthesis; dimethylallyl diphosphate from isopentenyl diphosphate: step 1/1. Catalyzes the 1,3-allylic rearrangement of the homoallylic substrate isopentenyl (IPP) to its highly electrophilic allylic isomer, dimethylallyl diphosphate (DMAPP). In Corynebacterium efficiens (strain DSM 44549 / YS-314 / AJ 12310 / JCM 11189 / NBRC 100395), this protein is Isopentenyl-diphosphate Delta-isomerase.